The sequence spans 183 residues: Large ribosomal subunit protein uL5 (183 aa).

Belongs to the universal ribosomal protein uL5 family. Part of the 50S ribosomal subunit; part of the 5S rRNA/L5/L18/L25 subcomplex. Contacts the 5S rRNA and the P site tRNA. Forms a bridge to the 30S subunit in the 70S ribosome.

In terms of biological role, this is one of the proteins that bind and probably mediate the attachment of the 5S RNA into the large ribosomal subunit, where it forms part of the central protuberance. In the 70S ribosome it contacts protein S13 of the 30S subunit (bridge B1b), connecting the 2 subunits; this bridge is implicated in subunit movement. Contacts the P site tRNA; the 5S rRNA and some of its associated proteins might help stabilize positioning of ribosome-bound tRNAs. This is Large ribosomal subunit protein uL5 from Corynebacterium aurimucosum (strain ATCC 700975 / DSM 44827 / CIP 107346 / CN-1) (Corynebacterium nigricans).